Reading from the N-terminus, the 284-residue chain is Cysteine-rich repeat secretory protein 8 (284 aa).

Residues M1 to S27 form the signal peptide. Gnk2-homologous domains lie at M32 to F136 and S151 to L259.

The protein belongs to the cysteine-rich repeat secretory protein family.

The protein resides in the secreted. This chain is Cysteine-rich repeat secretory protein 8 (CRRSP8), found in Arabidopsis thaliana (Mouse-ear cress).